We begin with the raw amino-acid sequence, 299 residues long: MAELGLNEHHQNEVINYMRFARSKRGLRLKTVDSCFQDLKDSRLVEETFTIDEVSEVLNGLQAVVHSEVESELINTAYTNVLLLRQLFSQAEKWYLKLQTDISELENRELLEQVAEFEKAEFVSSSKKPIIDITKPKLVPINEGGTTELLNKEILRLQQENEKLKSRLKTIEIQAVNALDEKSKLERVLQDLQLDQENQQDLLKAQDLDDLENTVATLRSEFQKTLNDKTENQKSLEENLAAAKHDLLRVQEQLSMAEKELEKKFQQTAAYRNMKEILTKKNDQIKDLRKRLAKYESED.

Residues 96–299 (LKLQTDISEL…KRLAKYESED (204 aa)) adopt a coiled-coil conformation. The interval 145–299 (GTTELLNKEI…KRLAKYESED (155 aa)) is interaction with BSS9.

The protein belongs to the LZTFL1 family. As to quaternary structure, self-associates. Interacts with BBS9; the interaction mediates the association of LZTL1 with the BBsome complex and regulates BBSome ciliary trafficking. In terms of tissue distribution, highly expressed in testis. Expressed in brain, cerebellum, eye, heart, kidney, liver, lung and trachea. In small intestine, graded expression along the crypt-villus axis with high levels in the villus apex and lower levels in the crypt stem cells (at protein level). Not expressed in skeletal muscle and white adipose tissue.

It localises to the cytoplasm. In terms of biological role, regulates ciliary localization of the BBSome complex. Together with the BBSome complex, controls SMO ciliary trafficking and contributes to the sonic hedgehog (SHH) pathway regulation. May play a role in neurite outgrowth. May have tumor suppressor function. The protein is Leucine zipper transcription factor-like protein 1 (Lztfl1) of Mus musculus (Mouse).